Reading from the N-terminus, the 155-residue chain is Protein-export protein SecB (155 aa).

This sequence belongs to the SecB family. As to quaternary structure, homotetramer, a dimer of dimers. One homotetramer interacts with 1 SecA dimer.

The protein localises to the cytoplasm. Its function is as follows. One of the proteins required for the normal export of preproteins out of the cell cytoplasm. It is a molecular chaperone that binds to a subset of precursor proteins, maintaining them in a translocation-competent state. It also specifically binds to its receptor SecA. The chain is Protein-export protein SecB from Vibrio vulnificus (strain CMCP6).